Reading from the N-terminus, the 360-residue chain is Putative F-box protein At5g55150 (360 aa).

The 49-residue stretch at 6 to 54 folds into the F-box domain; sequence SSWSEFLPELLNTVFHNLNDARDILNCATVCSSWKDSSSAVYYSRTFSP.

The protein is Putative F-box protein At5g55150 of Arabidopsis thaliana (Mouse-ear cress).